The sequence spans 212 residues: MNLLIMGLPGAGKGTQAAKIVEEFGVAHISTGDMFRAAMANQTEMGRLAKSYIDKGELVPDEVTNGIVKERLAEDDIAEKGFLLDGYPRTIEQAHALDATLEELGLRLDGVINIKVDPSCLVERLSGRIINRKTGETFHKVFNPPVDYKEEDYYQREDDKPETVKRRLDVNMAQGEPILEHYRKLDLVTDIEGNQEITDVFADVEKALLELK.

Residue 10–15 (GAGKGT) coordinates ATP. Residues 30–59 (STGDMFRAAMANQTEMGRLAKSYIDKGELV) form an NMP region. AMP is bound by residues Thr31, Arg36, 57–59 (ELV), 86–89 (GYPR), and Gln93. An LID region spans residues 127–159 (GRIINRKTGETFHKVFNPPVDYKEEDYYQREDD). ATP-binding positions include Arg128 and 137 to 138 (TF). AMP contacts are provided by Arg156 and Arg167. Gln195 contributes to the ATP binding site.

It belongs to the adenylate kinase family. As to quaternary structure, monomer.

It localises to the cytoplasm. The catalysed reaction is AMP + ATP = 2 ADP. It participates in purine metabolism; AMP biosynthesis via salvage pathway; AMP from ADP: step 1/1. Its function is as follows. Catalyzes the reversible transfer of the terminal phosphate group between ATP and AMP. Plays an important role in cellular energy homeostasis and in adenine nucleotide metabolism. The polypeptide is Adenylate kinase (Streptococcus pyogenes serotype M5 (strain Manfredo)).